The chain runs to 447 residues: MPSDHPDFRSKSARLRCQPPRTNNCGTFKQPPSVAATSRPKPGNPFLQPPTKGTPPPKKKKKNHTEGCHTHEANPEPNTKHTETEPPIISHCPPPHPGPTATPNLLPCPNPTSSFCQNTRDSPSLPPNVQTWSIFPKHPSKDVTAQVKSQSVSHRAPITYQPPRPTTTSNPRISQSYHMKSISSYLSFAHMNITHTTEQHAENQPHWKTILDIAPFVSITFPAIMCLIFDEDSFEESPFLRFITLLLPFSYSAVQYALLYTNWKSHNKPEPILHTTLYYTLSLLLLAFTIISILSIIPFSLNEWDHAASFFYPIVLPSFTVPPAYLLSSSYFLVPRQIRLTDTVISILISVCSIVNVLLVFKEFNYYPYSAIISSISVLLQLLSEKHCLFKQSPPSTASSRAAVLILTLILAVLVYTFLGYGAIYILDDHFHLLGKMKSILPSEPHQ.

2 stretches are compositionally biased toward basic and acidic residues: residues 1 to 10 (MPSDHPDFRS) and 64 to 84 (HTEGCHTHEANPEPNTKHTET). Disordered regions lie at residues 1–103 (MPSD…TATP) and 147–173 (VKSQSVSHRAPITYQPPRPTTTSNPRI). Positions 92–103 (CPPPHPGPTATP) are enriched in pro residues.

This sequence belongs to the UPF0328 family.

This is UPF0328 protein ECU10_1870 from Encephalitozoon cuniculi (strain GB-M1) (Microsporidian parasite).